Consider the following 147-residue polypeptide: Large ribosomal subunit protein uL11 (147 aa).

Belongs to the universal ribosomal protein uL11 family. Part of the ribosomal stalk of the 50S ribosomal subunit. Interacts with L10 and the large rRNA to form the base of the stalk. L10 forms an elongated spine to which L12 dimers bind in a sequential fashion forming a multimeric L10(L12)X complex. Post-translationally, one or more lysine residues are methylated.

In terms of biological role, forms part of the ribosomal stalk which helps the ribosome interact with GTP-bound translation factors. The polypeptide is Large ribosomal subunit protein uL11 (Sorangium cellulosum (strain So ce56) (Polyangium cellulosum (strain So ce56))).